The sequence spans 397 residues: Phosphoglycerate kinase (397 aa).

Residues 25–27, arginine 41, 64–67, arginine 118, and arginine 151 contribute to the substrate site; these read DLN and HLGR. ATP contacts are provided by residues lysine 202, glutamate 324, and 350-353; that span reads GGDT.

The protein belongs to the phosphoglycerate kinase family. Monomer.

It is found in the cytoplasm. It carries out the reaction (2R)-3-phosphoglycerate + ATP = (2R)-3-phospho-glyceroyl phosphate + ADP. Its pathway is carbohydrate degradation; glycolysis; pyruvate from D-glyceraldehyde 3-phosphate: step 2/5. The chain is Phosphoglycerate kinase from Leptothrix cholodnii (strain ATCC 51168 / LMG 8142 / SP-6) (Leptothrix discophora (strain SP-6)).